Consider the following 352-residue polypeptide: UDP-N-acetylglucosamine--N-acetylmuramyl-(pentapeptide) pyrophosphoryl-undecaprenol N-acetylglucosamine transferase 2 (352 aa).

UDP-N-acetyl-alpha-D-glucosamine contacts are provided by residues 11-13 (SAG), Arg-164, Ser-194, and Gln-289.

Belongs to the glycosyltransferase 28 family. MurG subfamily.

Its subcellular location is the cell membrane. It carries out the reaction di-trans,octa-cis-undecaprenyl diphospho-N-acetyl-alpha-D-muramoyl-L-alanyl-D-glutamyl-meso-2,6-diaminopimeloyl-D-alanyl-D-alanine + UDP-N-acetyl-alpha-D-glucosamine = di-trans,octa-cis-undecaprenyl diphospho-[N-acetyl-alpha-D-glucosaminyl-(1-&gt;4)]-N-acetyl-alpha-D-muramoyl-L-alanyl-D-glutamyl-meso-2,6-diaminopimeloyl-D-alanyl-D-alanine + UDP + H(+). It participates in cell wall biogenesis; peptidoglycan biosynthesis. Cell wall formation. Catalyzes the transfer of a GlcNAc subunit on undecaprenyl-pyrophosphoryl-MurNAc-pentapeptide (lipid intermediate I) to form undecaprenyl-pyrophosphoryl-MurNAc-(pentapeptide)GlcNAc (lipid intermediate II). The protein is UDP-N-acetylglucosamine--N-acetylmuramyl-(pentapeptide) pyrophosphoryl-undecaprenol N-acetylglucosamine transferase 2 of Bacillus thuringiensis subsp. konkukian (strain 97-27).